A 117-amino-acid chain; its full sequence is Urease subunit beta (117 aa).

Residues 95–117 (NAVNGKLDGGPHPGVPATERGAK) form a disordered region.

The protein belongs to the urease beta subunit family. Heterotrimer of UreA (gamma), UreB (beta) and UreC (alpha) subunits. Three heterotrimers associate to form the active enzyme.

The protein resides in the cytoplasm. The catalysed reaction is urea + 2 H2O + H(+) = hydrogencarbonate + 2 NH4(+). Its pathway is nitrogen metabolism; urea degradation; CO(2) and NH(3) from urea (urease route): step 1/1. The chain is Urease subunit beta from Pseudarthrobacter chlorophenolicus (strain ATCC 700700 / DSM 12829 / CIP 107037 / JCM 12360 / KCTC 9906 / NCIMB 13794 / A6) (Arthrobacter chlorophenolicus).